A 133-amino-acid chain; its full sequence is Protein PROTON GRADIENT REGULATION 5, chloroplastic (133 aa).

The N-terminal 60 residues, 1–60 (MAAASISAIGCNQTLIGTSFYGGWGSSISGEDYQTMLSKTVAPPQQARVSRKAIRAVPMM), are a transit peptide targeting the chloroplast.

The protein belongs to the PGR5 family. In terms of assembly, interacts with PGRL1A and PGRL1B. Post-translationally, disulfide bonds; Cys-11 and Cys-105 are probably involved in the formation of disulfide bridges with 'Cys-300' and 'Cys-303' of PGRL1A. 'Cys-272' and 'Cys-275' of PGRL1A may also be used to form the disulfide bridges, but in this case the cyclic electron flow is lost.

It is found in the plastid. It localises to the chloroplast thylakoid membrane. Critical for growth under fluctuating-light conditions. Involved in the regulation of the cyclic electron flow (CEF) around Photosystem I. Essential for the reduction of PGRL1A by ferredoxin and for photoprotection. Contributes to maximize photosynthesis efficiency after a long dark adaptation via the regulation of non-photochemical quenching (NPQ); acts independently from DLDG1. Promotes the induction of steady-state proton motive force (pmf) and energy-dependent quenching (qE). This Arabidopsis thaliana (Mouse-ear cress) protein is Protein PROTON GRADIENT REGULATION 5, chloroplastic.